The chain runs to 145 residues: D-aminoacyl-tRNA deacylase (145 aa).

The Gly-cisPro motif, important for rejection of L-amino acids motif lies at 137–138 (GP).

It belongs to the DTD family. In terms of assembly, homodimer.

The protein resides in the cytoplasm. It catalyses the reaction glycyl-tRNA(Ala) + H2O = tRNA(Ala) + glycine + H(+). The catalysed reaction is a D-aminoacyl-tRNA + H2O = a tRNA + a D-alpha-amino acid + H(+). Functionally, an aminoacyl-tRNA editing enzyme that deacylates mischarged D-aminoacyl-tRNAs. Also deacylates mischarged glycyl-tRNA(Ala), protecting cells against glycine mischarging by AlaRS. Acts via tRNA-based rather than protein-based catalysis; rejects L-amino acids rather than detecting D-amino acids in the active site. By recycling D-aminoacyl-tRNA to D-amino acids and free tRNA molecules, this enzyme counteracts the toxicity associated with the formation of D-aminoacyl-tRNA entities in vivo and helps enforce protein L-homochirality. The sequence is that of D-aminoacyl-tRNA deacylase from Streptomyces avermitilis (strain ATCC 31267 / DSM 46492 / JCM 5070 / NBRC 14893 / NCIMB 12804 / NRRL 8165 / MA-4680).